The following is a 134-amino-acid chain: NADH-quinone oxidoreductase subunit A (134 aa).

The next 3 helical transmembrane spans lie at 12-32 (FAIY…LAAL), 64-84 (FYLV…LFAW), and 93-113 (WVGF…LVYL).

This sequence belongs to the complex I subunit 3 family. In terms of assembly, NDH-1 is composed of 13 different subunits. Subunits NuoA, H, J, K, L, M, N constitute the membrane sector of the complex.

The protein localises to the cell inner membrane. The catalysed reaction is a quinone + NADH + 5 H(+)(in) = a quinol + NAD(+) + 4 H(+)(out). Its function is as follows. NDH-1 shuttles electrons from NADH, via FMN and iron-sulfur (Fe-S) centers, to quinones in the respiratory chain. The immediate electron acceptor for the enzyme in this species is believed to be ubiquinone. Couples the redox reaction to proton translocation (for every two electrons transferred, four hydrogen ions are translocated across the cytoplasmic membrane), and thus conserves the redox energy in a proton gradient. The polypeptide is NADH-quinone oxidoreductase subunit A (Shewanella oneidensis (strain ATCC 700550 / JCM 31522 / CIP 106686 / LMG 19005 / NCIMB 14063 / MR-1)).